Consider the following 298-residue polypeptide: Mitochondrial dicarboxylate transporter (298 aa).

Solcar repeat units follow at residues 11–95 (KNIK…LKEN), 103–195 (TNMA…FKNY), and 205–289 (SKNY…LKKH). 6 helical membrane passes run 17–37 (WWYGGAAGIFATMVTHPLDLA), 58–76 (ILANEGVVGLYSGLSAAVL), 105–126 (MAYLLPCSMFSGAIGGLAGNFA), 170–189 (GWKPNMVRGILMTASQVVTY), 211–231 (LTASLLAGLVATTVCSPADVM), and 265–283 (WLPSFTRLGPFTMLIFFAI).

Belongs to the mitochondrial carrier (TC 2.A.29) family. As to quaternary structure, homodimer. Binds to the TIM22 translocation complex during import.

Its subcellular location is the mitochondrion inner membrane. In terms of biological role, mitochondrial dicarboxylic transporter catalyzing the exchange of dicarboxylic acids like malate and succinate for inorganic phosphate. Required for growth on ethanol and acetate. The polypeptide is Mitochondrial dicarboxylate transporter (DIC1) (Saccharomyces cerevisiae (strain ATCC 204508 / S288c) (Baker's yeast)).